The following is a 201-amino-acid chain: Large ribosomal subunit protein uL4 (201 aa).

Residues 46-71 (QKTRAEITGSGKKPWRQKGTGRARSG) form a disordered region.

It belongs to the universal ribosomal protein uL4 family. Part of the 50S ribosomal subunit.

Functionally, one of the primary rRNA binding proteins, this protein initially binds near the 5'-end of the 23S rRNA. It is important during the early stages of 50S assembly. It makes multiple contacts with different domains of the 23S rRNA in the assembled 50S subunit and ribosome. Its function is as follows. Forms part of the polypeptide exit tunnel. This Klebsiella pneumoniae (strain 342) protein is Large ribosomal subunit protein uL4.